Reading from the N-terminus, the 245-residue chain is Purine nucleoside phosphorylase (245 aa).

Residue histidine 7 participates in a purine D-ribonucleoside binding. Phosphate contacts are provided by residues 23 to 27 (GDPGR), arginine 45, and 88 to 91 (RAGS). A purine D-ribonucleoside is bound at residue 183–184 (ME). Aspartate 206 functions as the Proton donor in the catalytic mechanism.

It belongs to the PNP/MTAP phosphorylase family. As to quaternary structure, homohexamer; trimer of homodimers.

It catalyses the reaction inosine + phosphate = alpha-D-ribose 1-phosphate + hypoxanthine. It carries out the reaction guanosine + phosphate = alpha-D-ribose 1-phosphate + guanine. The catalysed reaction is 2'-deoxyguanosine + phosphate = 2-deoxy-alpha-D-ribose 1-phosphate + guanine. The enzyme catalyses 2'-deoxyinosine + phosphate = 2-deoxy-alpha-D-ribose 1-phosphate + hypoxanthine. It catalyses the reaction S-methyl-5'-thioinosine + phosphate = 5-(methylsulfanyl)-alpha-D-ribose 1-phosphate + hypoxanthine. Its pathway is purine metabolism; purine nucleoside salvage. Inhibited by Immucillin-H and 5'-methylthio-Immucillin-H. Inhibited by 5'-deaza-1'-aza-2c-deoxy-1'-(9-methylene)-Immucilin-G (DADMe-ImmG). As part of the purine salvage pathway, catalyzes the phosphorolytic breakdown of the N-glycosidic bond in the beta-(deoxy)ribonucleoside molecules, with the formation of the corresponding free purine bases and pentose-1-phosphate. Preferentially acts on inosine and guanosine, and to a lesser extent on 2'-deoxyguanosine and guanosine. Also catalyzes the phosphorylation of S-methyl-5'-thioinosine (MTI) to hypoxanthine; MTI is produced by adenosine deaminase (ADA)-mediated breakdown of S-methyl-5'-thioadenosine (MTA), a major by-product of polyamine biosynthesis. Generates hypoxanthine from both the purine salvage pathway and from polyamine metabolism which is required for nucleic acids synthesis. Has no activity towards adenosine. This chain is Purine nucleoside phosphorylase, found in Plasmodium falciparum (isolate 3D7).